The primary structure comprises 261 residues: MAAIAIPENTRVFLLDIEGTTTPITFVKDILFPYIRENLEDYLSAHWEEDECKQDVHLLKKQTEEDLRQNKACHVHTVDQTVHTDEEKAIREVVENVLWQMAADRKTTALKQLQGHMWRAAYMMGRIKGEVYQDVVPAIRRWRHHGLKIYIYSSGSVEAQKLLFGYSVQGDILDLFDGHFDTNIGAKVESKSYENIAERIGCQPEEIMFLTDVTREAKAAEDAGVNVAVVVRPGNMELTEEERDHYRIITSFNQLELIGNV.

Mg(2+)-binding residues include aspartate 16 and glutamate 18. Residues 153-154 (SS) and lysine 187 each bind substrate. Residue aspartate 212 coordinates Mg(2+).

Belongs to the HAD-like hydrolase superfamily. MasA/MtnC family. Monomer. Mg(2+) serves as cofactor.

Its subcellular location is the cytoplasm. The protein resides in the nucleus. The enzyme catalyses 5-methylsulfanyl-2,3-dioxopentyl phosphate + H2O = 1,2-dihydroxy-5-(methylsulfanyl)pent-1-en-3-one + phosphate. It participates in amino-acid biosynthesis; L-methionine biosynthesis via salvage pathway; L-methionine from S-methyl-5-thio-alpha-D-ribose 1-phosphate: step 3/6. The protein operates within amino-acid biosynthesis; L-methionine biosynthesis via salvage pathway; L-methionine from S-methyl-5-thio-alpha-D-ribose 1-phosphate: step 4/6. Bifunctional enzyme that catalyzes the enolization of 2,3-diketo-5-methylthiopentyl-1-phosphate (DK-MTP-1-P) into the intermediate 2-hydroxy-3-keto-5-methylthiopentenyl-1-phosphate (HK-MTPenyl-1-P), which is then dephosphorylated to form the acireductone 1,2-dihydroxy-3-keto-5-methylthiopentene (DHK-MTPene). In Danio rerio (Zebrafish), this protein is Enolase-phosphatase E1 (enoph1).